The sequence spans 210 residues: Thiamine-phosphate synthase (210 aa).

Residues Gln39–Lys43 and Asn71 contribute to the 4-amino-2-methyl-5-(diphosphooxymethyl)pyrimidine site. 2 residues coordinate Mg(2+): Asp72 and Asp91. Residue Ser110 participates in 4-amino-2-methyl-5-(diphosphooxymethyl)pyrimidine binding. Thr134 to Thr136 is a 2-[(2R,5Z)-2-carboxy-4-methylthiazol-5(2H)-ylidene]ethyl phosphate binding site. Lys137 contacts 4-amino-2-methyl-5-(diphosphooxymethyl)pyrimidine. Gly163 lines the 2-[(2R,5Z)-2-carboxy-4-methylthiazol-5(2H)-ylidene]ethyl phosphate pocket.

Belongs to the thiamine-phosphate synthase family. It depends on Mg(2+) as a cofactor.

The enzyme catalyses 2-[(2R,5Z)-2-carboxy-4-methylthiazol-5(2H)-ylidene]ethyl phosphate + 4-amino-2-methyl-5-(diphosphooxymethyl)pyrimidine + 2 H(+) = thiamine phosphate + CO2 + diphosphate. It catalyses the reaction 2-(2-carboxy-4-methylthiazol-5-yl)ethyl phosphate + 4-amino-2-methyl-5-(diphosphooxymethyl)pyrimidine + 2 H(+) = thiamine phosphate + CO2 + diphosphate. The catalysed reaction is 4-methyl-5-(2-phosphooxyethyl)-thiazole + 4-amino-2-methyl-5-(diphosphooxymethyl)pyrimidine + H(+) = thiamine phosphate + diphosphate. It participates in cofactor biosynthesis; thiamine diphosphate biosynthesis; thiamine phosphate from 4-amino-2-methyl-5-diphosphomethylpyrimidine and 4-methyl-5-(2-phosphoethyl)-thiazole: step 1/1. Condenses 4-methyl-5-(beta-hydroxyethyl)thiazole monophosphate (THZ-P) and 2-methyl-4-amino-5-hydroxymethyl pyrimidine pyrophosphate (HMP-PP) to form thiamine monophosphate (TMP). The protein is Thiamine-phosphate synthase of Campylobacter jejuni subsp. jejuni serotype O:2 (strain ATCC 700819 / NCTC 11168).